Consider the following 509-residue polypeptide: Photosystem II CP47 reaction center protein (509 aa).

6 helical membrane passes run 21–36, 101–115, 140–156, 203–218, 237–252, and 457–472; these read AVHL…WAGS, IVLS…IWHW, GIHL…FGAF, IAAG…FHLT, VLSS…AFVT, and NFAL…HGSR.

The protein belongs to the PsbB/PsbC family. PsbB subfamily. In terms of assembly, PSII is composed of 1 copy each of membrane proteins PsbA, PsbB, PsbC, PsbD, PsbE, PsbF, PsbH, PsbI, PsbJ, PsbK, PsbL, PsbM, PsbT, PsbX, PsbY, PsbZ, Psb30/Ycf12, at least 3 peripheral proteins of the oxygen-evolving complex and a large number of cofactors. It forms dimeric complexes. Binds multiple chlorophylls. PSII binds additional chlorophylls, carotenoids and specific lipids. is required as a cofactor.

It localises to the plastid. The protein localises to the chloroplast thylakoid membrane. Its function is as follows. One of the components of the core complex of photosystem II (PSII). It binds chlorophyll and helps catalyze the primary light-induced photochemical processes of PSII. PSII is a light-driven water:plastoquinone oxidoreductase, using light energy to abstract electrons from H(2)O, generating O(2) and a proton gradient subsequently used for ATP formation. This chain is Photosystem II CP47 reaction center protein, found in Pyropia yezoensis (Susabi-nori).